Consider the following 476-residue polypeptide: Transcription factor HBP-1b(c1) (476 aa).

3 disordered regions span residues 1–29, 133–159, and 171–207; these read ESRR…FGAP, HNND…PDID, and QLAA…RKSR. Over residues 10 to 25 the composition is skewed to low complexity; sequence AAAAAAAGDPRGPMPG. The segment covering 135 to 144 has biased composition (polar residues); it reads NDNWGESSMA. Residues 180-191 show a composition bias toward basic and acidic residues; that stretch reads SSDKSRDKLDHK. In terms of domain architecture, bZIP spans 189 to 252; it reads DHKSLRRLAQ…SSGDQSQSAS (64 aa). The tract at residues 191–211 is basic motif; the sequence is KSLRRLAQNREAARKSRLRKK. Residues 201-242 adopt a coiled-coil conformation; sequence EAARKSRLRKKAYIQNLESSRLKLTQLEQELQRARQQGIFIS. The leucine-zipper stretch occupies residues 217-231; it reads LESSRLKLTQLEQEL. Residues 256-473 enclose the DOG1 domain; sequence AVAFDMEYAR…RALSSLWLAR (218 aa).

It belongs to the bZIP family. In terms of assembly, binds DNA as a dimer.

It localises to the nucleus. Functionally, transcriptional activator that binds specifically to the DNA sequence 5'-TGACG-3'. Recognizes ocs elements like the as-1 motif of the cauliflower mosaic virus 35S promoter. Binding to the as-1-like cis elements mediate auxin- and salicylic acid-inducible transcription. Binds to the hexamer motif 5'-ACGTCA-3' of histone gene promoters. The sequence is that of Transcription factor HBP-1b(c1) from Triticum aestivum (Wheat).